Here is a 698-residue protein sequence, read N- to C-terminus: Serotransferrin (698 aa).

Positions 1–19 (MRFAVGALLACAALGLCLA) are cleaved as a signal peptide. 2 Transferrin-like domains span residues 25-347 (VKWC…NQRE) and 360-683 (VKWC…NIRK). Cystine bridges form between cysteine 28/cysteine 67 and cysteine 38/cysteine 58. At arginine 42 the chain carries Dimethylated arginine. 2 residues coordinate Fe(3+): aspartate 82 and tyrosine 114. 8 cysteine pairs are disulfide-bonded: cysteine 137–cysteine 213, cysteine 156–cysteine 350, cysteine 177–cysteine 193, cysteine 180–cysteine 196, cysteine 190–cysteine 198, cysteine 246–cysteine 260, cysteine 363–cysteine 395, and cysteine 373–cysteine 386. The hydrogencarbonate site is built by threonine 139, arginine 143, alanine 145, and glycine 146. Tyrosine 207 serves as a coordination point for Fe(3+). Histidine 268 provides a ligand contact to Fe(3+). At serine 388 the chain carries Phosphoserine. Fe(3+)-binding residues include aspartate 410 and tyrosine 447. 8 disulfide bridges follow: cysteine 420–cysteine 693, cysteine 435–cysteine 656, cysteine 471–cysteine 542, cysteine 495–cysteine 684, cysteine 505–cysteine 519, cysteine 516–cysteine 525, cysteine 582–cysteine 596, and cysteine 634–cysteine 639. Positions 473, 477, 479, and 480 each coordinate hydrogencarbonate. Asparagine 512 is a glycosylation site (N-linked (GlcNAc...) asparagine). Fe(3+) is bound at residue tyrosine 536. Histidine 604 contributes to the Fe(3+) binding site. Serine 685 bears the Phosphoserine mark.

This sequence belongs to the transferrin family. Monomer. Part of a complex composed of SLC40A1/ferroportin, TF/transferrin and HEPH/hephaestin that transfers iron from cells to transferrin. As to expression, expressed by the liver and secreted in plasma.

Its subcellular location is the secreted. Its function is as follows. Transferrins are iron binding transport proteins which can bind two Fe(3+) ions in association with the binding of an anion, usually bicarbonate. It is responsible for the transport of iron from sites of absorption and heme degradation to those of storage and utilization. Serum transferrin may also have a further role in stimulating cell proliferation. In Rattus norvegicus (Rat), this protein is Serotransferrin (Tf).